The primary structure comprises 373 residues: Cobalt-precorrin-5B C(1)-methyltransferase (373 aa).

The protein belongs to the CbiD family.

The catalysed reaction is Co-precorrin-5B + S-adenosyl-L-methionine = Co-precorrin-6A + S-adenosyl-L-homocysteine. The protein operates within cofactor biosynthesis; adenosylcobalamin biosynthesis; cob(II)yrinate a,c-diamide from sirohydrochlorin (anaerobic route): step 6/10. Catalyzes the methylation of C-1 in cobalt-precorrin-5B to form cobalt-precorrin-6A. The polypeptide is Cobalt-precorrin-5B C(1)-methyltransferase (Polaromonas sp. (strain JS666 / ATCC BAA-500)).